Reading from the N-terminus, the 704-residue chain is ATP-dependent zinc metalloprotease FtsH (704 aa).

Residues 1–17 are Cytoplasmic-facing; that stretch reads MADSAKTPRGKKRRPFT. A helical membrane pass occupies residues 18–38; sequence GLALWIIVALLLGMAMFSLFG. The Extracellular portion of the chain corresponds to 39 to 127; that stretch reads RDGYQQIDTQ…DEIASSSWWS (89 aa). The chain crosses the membrane as a helical span at residues 128-148; the sequence is TLLLSFLPLLIFIGLFWFLIM. At 149 to 704 the chain is on the cytoplasmic side; it reads NAQGGGKAMQ…GSAGTDGTGR (556 aa). Residue 217–224 participates in ATP binding; the sequence is GPPGTGKT. Position 439 (His439) interacts with Zn(2+). The active site involves Glu440. Residues His443 and Asp515 each contribute to the Zn(2+) site. The tract at residues 624 to 704 is disordered; the sequence is PREVWISSTE…GSAGTDGTGR (81 aa). The segment covering 681-704 has biased composition (gly residues); that stretch reads PHGGEPGGGGYGYDGSAGTDGTGR.

It in the central section; belongs to the AAA ATPase family. The protein in the C-terminal section; belongs to the peptidase M41 family. In terms of assembly, homohexamer. The cofactor is Zn(2+).

The protein resides in the cell membrane. Acts as a processive, ATP-dependent zinc metallopeptidase for both cytoplasmic and membrane proteins. Plays a role in the quality control of integral membrane proteins. The sequence is that of ATP-dependent zinc metalloprotease FtsH from Brachybacterium faecium (strain ATCC 43885 / DSM 4810 / JCM 11609 / LMG 19847 / NBRC 14762 / NCIMB 9860 / 6-10).